We begin with the raw amino-acid sequence, 207 residues long: Glutathione S-transferase 3 (207 aa).

Residues 2 to 79 (VHYKLTYFNA…YLARKFGFVG (78 aa)) form the GST N-terminal domain. Glutathione is bound by residues tyrosine 8, lysine 43, 49–51 (GQV), and 63–64 (QS). Residues 81-207 (TAEEELQADE…WLAKRPETRF (127 aa)) enclose the GST C-terminal domain.

It belongs to the GST superfamily. Sigma family.

The enzyme catalyses RX + glutathione = an S-substituted glutathione + a halide anion + H(+). Conjugation of reduced glutathione to a wide number of exogenous and endogenous hydrophobic electrophiles. This Caenorhabditis elegans protein is Glutathione S-transferase 3 (gst-3).